We begin with the raw amino-acid sequence, 121 residues long: Small ribosomal subunit protein uS13 (121 aa).

Positions 96–121 (PVRGQNTKNNARTRKGKAVAIAGKKK) are disordered. The segment covering 106-121 (ARTRKGKAVAIAGKKK) has biased composition (basic residues).

This sequence belongs to the universal ribosomal protein uS13 family. In terms of assembly, part of the 30S ribosomal subunit. Forms a loose heterodimer with protein S19. Forms two bridges to the 50S subunit in the 70S ribosome.

Its function is as follows. Located at the top of the head of the 30S subunit, it contacts several helices of the 16S rRNA. In the 70S ribosome it contacts the 23S rRNA (bridge B1a) and protein L5 of the 50S subunit (bridge B1b), connecting the 2 subunits; these bridges are implicated in subunit movement. Contacts the tRNAs in the A and P-sites. The sequence is that of Small ribosomal subunit protein uS13 from Streptococcus suis (strain 05ZYH33).